A 245-amino-acid chain; its full sequence is MEEPLTVAAIFRDPFNILAISEVLKVVAAVGWSVNYIGMVHRAWKDQIPSIGILPLCCDIGWEFVYAWMFPDFSSHWQGVVRVWFFLHSAVLLVTLKVSPNDWVHTPLGHRHIVFIYIFVTLVFGAGQYALAAEIGPALGFHWGGALCQFLSSSCGIAQLLSRGHTRGASYLIWFARAISTFAGFIKLCIRFQHNVDGAPWLDSPMCWFYIVTVLSFDAAYPFLYSSMRKLETPALRKESRIKNQ.

7 consecutive transmembrane segments (helical) span residues 17-37 (ILAI…VNYI), 51-71 (IGIL…WMFP), 76-96 (HWQG…LVTL), 113-133 (IVFI…ALAA), 138-158 (ALGF…CGIA), 170-190 (SYLI…KLCI), and 205-225 (PMCW…PFLY).

The protein belongs to the paxB family.

It localises to the membrane. The protein operates within secondary metabolite biosynthesis; terpenoid biosynthesis. In terms of biological role, terpene cyclase; part of the gene cluster that mediates the biosynthesis of paraherquonin, a meroterpenoid with a unique, highly congested hexacyclic molecular architecture. The first step of the pathway is the synthesis of 3,5-dimethylorsellinic acid (DMOA) by the polyketide synthase prhL. Synthesis of DMOA is followed by farnesylation by the prenyltransferase prhE, methylesterification by the methyl-transferase prhM, epoxidation of the prenyl chain by the flavin-dependent monooxygenase prhF, and cyclization of the farnesyl moiety by the terpene cyclase prhH, to yield the tetracyclic intermediate, protoaustinoid A. The short chain dehydrogenase prhI then oxidizes the C-3 alcohol group of the terpene cyclase product to transform protoaustinoid A into protoaustinoid B. The FAD-binding monooxygenase prhJ catalyzes the oxidation of protoaustinoid B into preaustinoid A which is further oxidized into preaustinoid A1 by FAD-binding monooxygenase phrK. Finally, prhA leads to berkeleydione via the berkeleyone B intermediate. PrhA is a multifunctional dioxygenase that first desaturates at C5-C6 to form berkeleyone B, followed by rearrangement of the A/B-ring to form the cycloheptadiene moiety in berkeleydione. Berkeleydione serves as the key intermediate for the biosynthesis of paraherquonin as well as many other meroterpenoids. The cytochrome P450 monooxygenases prhB, prhD, and prhN, as well as the isomerase prhC, are probably involved in the late stage of paraherquonin biosynthesis, after the production of berkeleydione. Especially prhC might be a multifunctional enzyme that catalyzes the D-ring expansion via intramolecular methoxy rearrangement, as well as the hydrolysis of the expanded D-ring. This Penicillium brasilianum protein is Terpene cyclase prhH.